Consider the following 335-residue polypeptide: Beta-hexosaminidase (335 aa).

Residues aspartate 60, arginine 68, arginine 133, and 163-164 contribute to the substrate site; that span reads KH. Residue histidine 176 is the Proton donor/acceptor of the active site. Residue aspartate 247 is the Nucleophile of the active site.

This sequence belongs to the glycosyl hydrolase 3 family. NagZ subfamily.

Its subcellular location is the cytoplasm. It carries out the reaction Hydrolysis of terminal non-reducing N-acetyl-D-hexosamine residues in N-acetyl-beta-D-hexosaminides.. The protein operates within cell wall biogenesis; peptidoglycan recycling. Functionally, plays a role in peptidoglycan recycling by cleaving the terminal beta-1,4-linked N-acetylglucosamine (GlcNAc) from peptide-linked peptidoglycan fragments, giving rise to free GlcNAc, anhydro-N-acetylmuramic acid and anhydro-N-acetylmuramic acid-linked peptides. The polypeptide is Beta-hexosaminidase (Stenotrophomonas maltophilia (strain R551-3)).